The sequence spans 59 residues: Large ribosomal subunit protein bL33 (59 aa).

Positions 26–59 (RYTTTKNKKNNTERLVLKKYNPNLKKHTEHKEIK) are disordered.

Belongs to the bacterial ribosomal protein bL33 family.

This Chlorobium phaeobacteroides (strain BS1) protein is Large ribosomal subunit protein bL33.